The chain runs to 521 residues: Lysine--tRNA ligase (521 aa).

Positions Pro-32–Asn-40 match the 'HIGH' region motif. The short motif at Lys-280 to Ser-284 is the 'KMSKS' region element.

This sequence belongs to the class-I aminoacyl-tRNA synthetase family.

Its subcellular location is the cytoplasm. The enzyme catalyses tRNA(Lys) + L-lysine + ATP = L-lysyl-tRNA(Lys) + AMP + diphosphate. This chain is Lysine--tRNA ligase, found in Borrelia garinii subsp. bavariensis (strain ATCC BAA-2496 / DSM 23469 / PBi) (Borreliella bavariensis).